Reading from the N-terminus, the 222-residue chain is 7-cyano-7-deazaguanine synthase (222 aa).

Position 7 to 17 (7 to 17 (LSGGMDSAVAT)) interacts with ATP. Residues Cys-188, Cys-196, Cys-199, and Cys-202 each contribute to the Zn(2+) site.

This sequence belongs to the QueC family. The cofactor is Zn(2+).

It carries out the reaction 7-carboxy-7-deazaguanine + NH4(+) + ATP = 7-cyano-7-deazaguanine + ADP + phosphate + H2O + H(+). The protein operates within purine metabolism; 7-cyano-7-deazaguanine biosynthesis. In terms of biological role, catalyzes the ATP-dependent conversion of 7-carboxy-7-deazaguanine (CDG) to 7-cyano-7-deazaguanine (preQ(0)). The polypeptide is 7-cyano-7-deazaguanine synthase (Methanothermobacter thermautotrophicus (strain ATCC 29096 / DSM 1053 / JCM 10044 / NBRC 100330 / Delta H) (Methanobacterium thermoautotrophicum)).